Reading from the N-terminus, the 303-residue chain is Glutamyl-Q tRNA(Asp) synthetase (303 aa).

L-glutamate-binding positions include 9–13 (RFAPS) and Glu-45. Residues 12–22 (PSPSGSLHFGS) carry the 'HIGH' region motif. The Zn(2+) site is built by Cys-101, Cys-103, Tyr-115, and Cys-119. L-glutamate is bound by residues Tyr-172 and Arg-190. The 'KMSKS' region motif lies at 228–232 (KLSKQ). Residue Lys-231 coordinates ATP.

The protein belongs to the class-I aminoacyl-tRNA synthetase family. GluQ subfamily. Requires Zn(2+) as cofactor.

In terms of biological role, catalyzes the tRNA-independent activation of glutamate in presence of ATP and the subsequent transfer of glutamate onto a tRNA(Asp). Glutamate is transferred on the 2-amino-5-(4,5-dihydroxy-2-cyclopenten-1-yl) moiety of the queuosine in the wobble position of the QUC anticodon. This is Glutamyl-Q tRNA(Asp) synthetase from Serratia proteamaculans (strain 568).